The following is a 598-amino-acid chain: Nuclear receptor subfamily 4immunitygroup A member 1 (598 aa).

Disordered regions lie at residues 1–44 (MPCI…EAAP), 131–158 (YYGSPCSAPSPSTPSFQPPQLSPWDGSF), 177–206 (LPKASGPPQPPAFFSFSPPTGPSPSLAQSP), and 221–265 (GESY…GSEG). Over residues 134–145 (SPCSAPSPSTPS) the composition is skewed to low complexity. The segment at 171–466 (RAWTEQLPKA…PGEGKLIFCS (296 aa)) is required for nuclear import. The nuclear receptor DNA-binding region spans 264–339 (EGRCAVCGDN…VGMVKEVVRT (76 aa)). 2 NR C4-type zinc fingers span residues 267-287 (CAVCGDNASCQHYGVRTCEGC) and 303-327 (CLANKDCPVDKRRRNRCQFCRFQKC). A required for binding NBRE-containing DNA region spans residues 268–354 (AVCGDNASCQ…RRGRLPSKPK (87 aa)). A required for the interaction with RXRA region spans residues 299-361 (AKYICLANKD…KPKQPPDASP (63 aa)). Serine 341 is subject to Phosphoserine; by PKA. Positions 341–361 (SLKGRRGRLPSKPKQPPDASP) are disordered. Position 351 is a phosphoserine (serine 351). The region spanning 360 to 595 (SPANLLTSLV…PIIDKIFMDT (236 aa)) is the NR LBD domain. Positions 521-544 (PRRVEELQNRIASCLKEHVAAVAG) are binds lipopolysaccharide. The interval 584 to 595 (PPPIIDKIFMDT) is AF-2.

This sequence belongs to the nuclear hormone receptor family. NR4 subfamily. In terms of assembly, binds the NGFI-B response element (NBRE) as a monomer. Binds the Nur response element (NurRE), consisting of two inverse NBRE-related octanucleotide repeats separated by 6 base-pairs, as a dimer. Interacts (via N-terminus) with NLRP3 (via LRR repeat domain); the interaction is direct, requires binding of NR4A1/Nur77 to NBRE-containing dsDNA and lipopolysaccharide, and leads to non-canonical NLRP3 inflammasome activation. Interacts with GADD45GIP1. Interacts with STK11. Interacts with IFI27. Heterodimer (via DNA-binding domain) with RXRA (via C-terminus); DNA-binding of the heterodimer is enhanced by 9-cis retinoic acid. Competes for the RXRA interaction with EP300 and thereby attenuates EP300 mediated acetylation of RXRA. Interacts with NCOA1. Interacts with NCOA2. Interacts with NCOA3. It depends on Zn(2+) as a cofactor. Phosphorylated at Ser-351 by RPS6KA1 and RPS6KA3 in response to mitogenic or stress stimuli. In terms of processing, acetylated by p300/CBP, acetylation increases stability. Deacetylated by HDAC1. As to expression, fetal muscle and adult liver, brain and thyroid.

The protein localises to the nucleus. It localises to the cytoplasm. It is found in the cytosol. The protein resides in the mitochondrion. Its transcription factor activity is activated by binding cytosporone B (Csn-B) via its ligand-binding (NR LBD) domain and stimulates recruitment of coactivators NCOA1 and NCOA2, but not NCOA3, to promoters. Csn-B-binding is also accompanied by its translocation to the mitochondrion. Its transcription factor activity is activated by corticotropin-releasing hormone (CRH) and forskolin. Not activated by binding cytosporone C (Csn-C). Functionally, orphan nuclear receptor. Binds the NGFI-B response element (NBRE) 5'-AAAGGTCA-3'. Binds 9-cis-retinoic acid outside of its ligand-binding (NR LBD) domain. Participates in energy homeostasis by sequestrating the kinase STK11 in the nucleus, thereby attenuating cytoplasmic AMPK activation. Regulates the inflammatory response in macrophages by regulating metabolic adaptations during inflammation, including repressing the transcription of genes involved in the citric acid cycle (TCA). Inhibits NF-kappa-B signaling by binding to low-affinity NF-kappa-B binding sites, such as at the IL2 promoter. May act concomitantly with NR4A2 in regulating the expression of delayed-early genes during liver regeneration. Plays a role in the vascular response to injury. Its function is as follows. In the cytosol, upon its detection of both bacterial lipopolysaccharide (LPS) and NBRE-containing mitochondrial DNA released by GSDMD pores during pyroptosis, it promotes non-canonical NLRP3 inflammasome activation by stimulating association of NLRP3 and NEK7. The sequence is that of Nuclear receptor subfamily 4immunitygroup A member 1 (NR4A1) from Homo sapiens (Human).